A 185-amino-acid chain; its full sequence is Elongation factor P (185 aa).

This sequence belongs to the elongation factor P family.

It localises to the cytoplasm. The protein operates within protein biosynthesis; polypeptide chain elongation. Involved in peptide bond synthesis. Stimulates efficient translation and peptide-bond synthesis on native or reconstituted 70S ribosomes in vitro. Probably functions indirectly by altering the affinity of the ribosome for aminoacyl-tRNA, thus increasing their reactivity as acceptors for peptidyl transferase. The protein is Elongation factor P of Desulfitobacterium hafniense (strain Y51).